The primary structure comprises 257 residues: Microfibril-associated glycoprotein 4 (257 aa).

A signal peptide spans 1-22 (MKALPALPLMLMLLSMPPPCAP). The Cell attachment site signature appears at 28–30 (RGD). One can recognise a Fibrinogen C-terminal domain in the interval 34-257 (KSCLQQPLDC…KRTEMKIRRA (224 aa)). 2 N-linked (GlcNAc...) asparagine glycosylation sites follow: asparagine 89 and asparagine 139.

Homodimer. Can also form higher oligomers. Interacts with FBN1, FBN2 and LOX. Interacts with COL1A1 in a Ca (2+)-dependent manner. Interacts with ELN in a Ca (2+)-dependent manner; this interaction promotes ELN self-assembly.

It localises to the secreted. The protein localises to the extracellular space. Its subcellular location is the extracellular matrix. Functionally, could be involved in calcium-dependent cell adhesion or intercellular interactions. May contribute to the elastic fiber assembly and/or maintenance. The chain is Microfibril-associated glycoprotein 4 (Mfap4) from Mus musculus (Mouse).